The chain runs to 101 residues: Small ribosomal subunit protein uS10 (101 aa).

It belongs to the universal ribosomal protein uS10 family. As to quaternary structure, part of the 30S ribosomal subunit.

Functionally, involved in the binding of tRNA to the ribosomes. This Parabacteroides distasonis (strain ATCC 8503 / DSM 20701 / CIP 104284 / JCM 5825 / NCTC 11152) protein is Small ribosomal subunit protein uS10.